The chain runs to 862 residues: Squamosa promoter-binding-like protein 1 (862 aa).

Residues 55–98 (KRRRVSPEDDDGEECINAATTNGDDGQISGQRGRSSEDEMPRQG) are disordered. Residues 72–87 (AATTNGDDGQISGQRG) show a composition bias toward polar residues. The SBP-type zinc-finger motif lies at 104-181 (GPCCQVDGCT…AQHNRRRRKV (78 aa)). Zn(2+)-binding residues include C107, C112, C129, H132, C148, C151, H155, and C167. The short motif at 164–180 (KKSCRSRLAQHNRRRRK) is the Bipartite nuclear localization signal element.

As to expression, ubiquitous.

The protein resides in the nucleus. Functionally, trans-acting factor that binds specifically to the consensus nucleotide sequence 5'-TNCGTACAA-3'. This is Squamosa promoter-binding-like protein 1 (SPL1) from Oryza sativa subsp. japonica (Rice).